The primary structure comprises 273 residues: 3-((Z)-2-isocyanoethenyl)-1H-indole synthase (273 aa).

Fe cation-binding residues include His-105, Asp-107, and His-254.

This sequence belongs to the TfdA dioxygenase family. The cofactor is Fe(2+).

It carries out the reaction (2S)-3-(1H-indol-3-yl)-2-isocyanopropanoate + 2-oxoglutarate + O2 + H(+) = 3-[(Z)-2-isocyanoethenyl]-1H-indole + succinate + 2 CO2 + H2O. In terms of biological role, involved in the biosynthesis of ambiguines, a family of hapalindole-type alkaloids. Responsible for the synthesis of Z-3-(2-isocyanoethen)-indole, a biosynthetic precursor to all ambiguines. In Fischerella ambigua (strain UTEX 1903), this protein is 3-((Z)-2-isocyanoethenyl)-1H-indole synthase.